The chain runs to 301 residues: Prohibitin-2 (301 aa).

Necessary for transcriptional repression stretches follow at residues 19-49 (VGTALKLLLGAGALAYGVRESVFIVEGGQRA) and 150-174 (ASQLITQRAQVSLLIRRELTERAKD). The stretch at 190-237 (SREYTAAVEAKQVAQQEAQRAQFLVEKAKQEQKQKIVQAEGEATAAKM) forms a coiled coil.

It belongs to the prohibitin family. The mitochondrial prohibitin complex consists of two subunits (PHB1 and PHB2), assembled into a membrane-associated ring-shaped supercomplex of approximately 1 mDa.

The protein localises to the mitochondrion inner membrane. It localises to the cytoplasm. Its subcellular location is the nucleus. It is found in the cell membrane. Its function is as follows. Protein with pleiotropic attributes mediated in a cell-compartment- and tissue-specific manner, which include the plasma membrane-associated cell signaling functions, mitochondrial chaperone, and transcriptional co-regulator of transcription factors and sex steroid hormones in the nucleus. Functionally, in the mitochondria, together with PHB, forms large ring complexes (prohibitin complexes) in the inner mitochondrial membrane (IMM) and functions as a chaperone protein that stabilizes mitochondrial respiratory enzymes and maintains mitochondrial integrity in the IMM, which is required for mitochondrial morphogenesis, neuronal survival, and normal lifespan. In the nucleus, serves as transcriptional co-regulator. The polypeptide is Prohibitin-2 (PHB2) (Gallus gallus (Chicken)).